Here is a 152-residue protein sequence, read N- to C-terminus: Cytochrome c oxidase subunit 5A, mitochondrial (152 aa).

The transit peptide at 1 to 43 (MLGTALRRCAVAAAAASRAGPRGLLHPAPAPGPAAAIQSIRCY) directs the protein to the mitochondrion. The SIFI-degron motif lies at 2–22 (LGTALRRCAVAAAAASRAGPR). An N6-acetyllysine mark is found at Lys-89 and Lys-115. Thr-143 is modified (phosphothreonine).

Belongs to the cytochrome c oxidase subunit 5A family. As to quaternary structure, component of the cytochrome c oxidase (complex IV, CIV), a multisubunit enzyme composed of 14 subunits. The complex is composed of a catalytic core of 3 subunits MT-CO1, MT-CO2 and MT-CO3, encoded in the mitochondrial DNA, and 11 supernumerary subunits COX4I, COX5A, COX5B, COX6A, COX6B, COX6C, COX7A, COX7B, COX7C, COX8 and NDUFA4, which are encoded in the nuclear genome. The complex exists as a monomer or a dimer and forms supercomplexes (SCs) in the inner mitochondrial membrane with NADH-ubiquinone oxidoreductase (complex I, CI) and ubiquinol-cytochrome c oxidoreductase (cytochrome b-c1 complex, complex III, CIII), resulting in different assemblies (supercomplex SCI(1)III(2)IV(1) and megacomplex MCI(2)III(2)IV(2)). Interacts with AFG1L. Interacts with RAB5IF. Post-translationally, in response to mitochondrial stress, the precursor protein is ubiquitinated by the SIFI complex in the cytoplasm before mitochondrial import, leading to its degradation. Within the SIFI complex, UBR4 initiates ubiquitin chain that are further elongated or branched by KCMF1.

It is found in the mitochondrion inner membrane. It functions in the pathway energy metabolism; oxidative phosphorylation. Component of the cytochrome c oxidase, the last enzyme in the mitochondrial electron transport chain which drives oxidative phosphorylation. The respiratory chain contains 3 multisubunit complexes succinate dehydrogenase (complex II, CII), ubiquinol-cytochrome c oxidoreductase (cytochrome b-c1 complex, complex III, CIII) and cytochrome c oxidase (complex IV, CIV), that cooperate to transfer electrons derived from NADH and succinate to molecular oxygen, creating an electrochemical gradient over the inner membrane that drives transmembrane transport and the ATP synthase. Cytochrome c oxidase is the component of the respiratory chain that catalyzes the reduction of oxygen to water. Electrons originating from reduced cytochrome c in the intermembrane space (IMS) are transferred via the dinuclear copper A center (CU(A)) of subunit 2 and heme A of subunit 1 to the active site in subunit 1, a binuclear center (BNC) formed by heme A3 and copper B (CU(B)). The BNC reduces molecular oxygen to 2 water molecules using 4 electrons from cytochrome c in the IMS and 4 protons from the mitochondrial matrix. This Eulemur fulvus fulvus (Brown lemur) protein is Cytochrome c oxidase subunit 5A, mitochondrial (COX5A).